We begin with the raw amino-acid sequence, 1076 residues long: Ribosome quality control complex subunit NEMF (1076 aa).

Threonine 7 carries the post-translational modification Phosphothreonine. Residues 296-359 adopt a coiled-coil conformation; it reads VDEFYSKIEG…LIEMNLQIVD (64 aa). The residue at position 417 (serine 417) is a Phosphoserine. Residues 420–453 form a disordered region; sequence EDDDVDGDVNVEKNETEPPKGKKKKQKNKQLQKP. The span at 429–439 shows a compositional bias: basic and acidic residues; the sequence is NVEKNETEPPK. Positions 440-449 are enriched in basic residues; the sequence is GKKKKQKNKQ. A coiled-coil region spans residues 483–514; sequence AAKKTQKTVEAAEKAFKSAEKKTKQTLKEVQT. Composition is skewed to acidic residues over residues 691-710 and 742-754; these read ISEEMEQLDGGDTSSDEDKE and LIQEESSEDEGEY. 2 disordered regions span residues 691 to 715 and 742 to 972; these read ISEEMEQLDGGDTSSDEDKEEHETP and LIQE…DLDQ. Phosphoserine is present on residues serine 747, serine 748, and serine 763. Basic and acidic residues predominate over residues 755–768; the sequence is EEVRKDQDSVGEMK. The span at 777-795 shows a compositional bias: polar residues; it reads YPDTTIDLSHLQPQRSIQK. Phosphoserine is present on serine 831. The span at 839–854 shows a compositional bias: basic and acidic residues; sequence LEGKDKEKESTVHIET. A coiled-coil region spans residues 869–894; it reads KRGQKSKMKKMKEKYKDQDEEDRELI. Positions 870-881 are enriched in basic residues; that stretch reads RGQKSKMKKMKE. Residues 937–965 are compositionally biased toward basic and acidic residues; it reads DNIKKETPFLEVITHELQDFAVDDPHDDK.

It belongs to the NEMF family. In terms of assembly, component of the ribosome quality control complex (RQC), composed of the E3 ubiquitin ligase LTN1, TCF25 and NEMF associated with the 60S ribosomal subunit. The complex probably also contains VCP/p97 and its ubiquitin-binding cofactors. Interacts (via its N-terminus) with XPO1. Expressed in brain, heart, liver, lung, spleen, and skeletal muscle. Also expressed at lower levels in stomach and testis.

The protein resides in the cytoplasm. It localises to the cytosol. Its subcellular location is the nucleus. In terms of biological role, key component of the ribosome quality control complex (RQC), a ribosome-associated complex that mediates the extraction of incompletely synthesized nascent chains from stalled ribosomes as well as their ubiquitin-mediated proteasomal degradation. Thereby, frees 60S subunit ribosomes from the stalled translation complex and prevents the accumulation of nascent polypeptide chains that are potentially toxic for the cell. Within the RQC complex, NEMF specifically binds stalled 60S ribosomal subunits by recognizing an exposed, nascent chain-conjugated tRNA moiety and promotes the recruitment of LTN1 to stalled 60S subunits. Following binding to stalled 60S ribosomal subunits, NEMF mediates CAT tailing by recruiting alanine-charged tRNA to the A-site and directing the elongation of stalled nascent chains independently of mRNA or 40S subunits, leading to non-templated C-terminal alanine extensions (CAT tails). Mainly recruits alanine-charged tRNAs, but can also other amino acid-charged tRNAs. CAT tailing is required to promote ubiquitination of stalled nascent chains by different E3 ubiquitin-protein ligases. In the canonical RQC pathway (RQC-L), CAT tailing facilitates LTN1-dependent ubiquitination by exposing lysine residues that would otherwise remain buried in the ribosomal exit tunnel. In the alternative RQC pathway (RQC-C) CAT tailing creates an C-degron mainly composed of alanine that is recognized by the CRL2(KLHDC10) and RCHY1/PIRH2 E3 ligases, leading to ubiquitination and degradation of stalled nascent chains. NEMF may also indirectly play a role in nuclear export. In Homo sapiens (Human), this protein is Ribosome quality control complex subunit NEMF.